Consider the following 135-residue polypeptide: Transcriptional regulator HosA (135 aa).

In terms of domain architecture, HTH marR-type spans 4-134 (RNKAFHQLRQ…FMQLVRKMMN (131 aa)). The H-T-H motif DNA-binding region spans 48 to 71 (QVALIEAAVSTKATLAEMLARMEN).

In terms of biological role, involved in the temperature-dependent positive control of flagellum-driven swimming motility and cellular aggregation. Regulates fliC expression by directly interacting with fliC promoter. This Escherichia coli O111:H- protein is Transcriptional regulator HosA (hosA).